A 392-amino-acid chain; its full sequence is Acetyl-CoA acetyltransferase (392 aa).

The active-site Acyl-thioester intermediate is the Cys89. Residues His348 and Cys378 each act as proton acceptor in the active site.

This sequence belongs to the thiolase-like superfamily. Thiolase family. Homotetramer.

It localises to the cytoplasm. It carries out the reaction 2 acetyl-CoA = acetoacetyl-CoA + CoA. It participates in biopolymer metabolism; poly-(R)-3-hydroxybutanoate biosynthesis. It functions in the pathway metabolic intermediate biosynthesis; (R)-mevalonate biosynthesis; (R)-mevalonate from acetyl-CoA: step 1/3. The protein is Acetyl-CoA acetyltransferase of Shinella zoogloeoides (Crabtreella saccharophila).